Reading from the N-terminus, the 195-residue chain is FMN-dependent NADH:quinone oxidoreductase (195 aa).

FMN-binding positions include Ser10, 16-18 (SVS), and 88-91 (MYNF).

It belongs to the azoreductase type 1 family. Homodimer. FMN is required as a cofactor.

The enzyme catalyses 2 a quinone + NADH + H(+) = 2 a 1,4-benzosemiquinone + NAD(+). The catalysed reaction is N,N-dimethyl-1,4-phenylenediamine + anthranilate + 2 NAD(+) = 2-(4-dimethylaminophenyl)diazenylbenzoate + 2 NADH + 2 H(+). Its function is as follows. Quinone reductase that provides resistance to thiol-specific stress caused by electrophilic quinones. In terms of biological role, also exhibits azoreductase activity. Catalyzes the reductive cleavage of the azo bond in aromatic azo compounds to the corresponding amines. This chain is FMN-dependent NADH:quinone oxidoreductase, found in Francisella philomiragia subsp. philomiragia (strain ATCC 25017 / CCUG 19701 / FSC 153 / O#319-036).